A 475-amino-acid chain; its full sequence is Alginate biosynthesis protein AlgK (475 aa).

Positions 1-27 are cleaved as a signal peptide; it reads MKMPILPPLPLASRHLLLASAIALAAG. Cysteine 28 carries the N-palmitoyl cysteine lipid modification. The S-diacylglycerol cysteine moiety is linked to residue cysteine 28. Residues 436 to 475 form a disordered region; sequence SQAQQLLKREQQSRGNNWQATVSLLQSQDSPINEEEPESL. Residues 448 to 466 are compositionally biased toward polar residues; that stretch reads SRGNNWQATVSLLQSQDSP.

It belongs to the AlgK family. In terms of assembly, interacts with AlgX.

It is found in the cell outer membrane. The protein operates within glycan biosynthesis; alginate biosynthesis. Its function is as follows. May be involved in the polymerization of mannuronate to alginate. This Pseudomonas aeruginosa (strain ATCC 15692 / DSM 22644 / CIP 104116 / JCM 14847 / LMG 12228 / 1C / PRS 101 / PAO1) protein is Alginate biosynthesis protein AlgK (algK).